The sequence spans 298 residues: Multifunctional dioxygenase ausE (298 aa).

Positions 72 and 127 each coordinate substrate. Positions 130 and 132 each coordinate Fe cation. Thr167 provides a ligand contact to substrate. His214 lines the Fe cation pocket. Arg226 serves as a coordination point for substrate.

Belongs to the PhyH family. In terms of assembly, homodimer. The cofactor is Fe cation.

It catalyses the reaction preaustinoid A1 + 2-oxoglutarate + O2 = preaustinoid A2 + succinate + CO2 + H2O. The catalysed reaction is preaustinoid A2 + 2-oxoglutarate + O2 = preaustinoid A3 + succinate + CO2 + H2O. The enzyme catalyses berkeleyone A + 2-oxoglutarate + O2 = preaustinoid A + succinate + CO2 + H2O. The protein operates within secondary metabolite biosynthesis; terpenoid biosynthesis. Its function is as follows. Multifunctional dioxygenase; part of the gene cluster B that mediates the biosynthesis of austinol and dehydroaustinol, two fungal meroterpenoids. The first step of the pathway is the synthesis of 3,5-dimethylorsellinic acid by the polyketide synthase ausA. 3,5-dimethylorsellinic acid is then prenylated by the polyprenyl transferase ausN. Further epoxidation by the FAD-dependent monooxygenase ausM and cyclization by the probable terpene cyclase ausL lead to the formation of protoaustinoid A. Protoaustinoid A is then oxidized to spiro-lactone preaustinoid A3 by the combined action of the FAD-binding monooxygenases ausB and ausC, and the dioxygenase ausE. Acid-catalyzed keto-rearrangement and ring contraction of the tetraketide portion of preaustinoid A3 by ausJ lead to the formation of preaustinoid A4. The aldo-keto reductase ausK, with the help of ausH, is involved in the next step by transforming preaustinoid A4 into isoaustinone which is in turn hydroxylated by the P450 monooxygenase ausI to form austinolide. Finally, the cytochrome P450 monooxygenase ausG modifies austinolide to austinol. Austinol can be further modified to dehydroaustinol which forms a diffusible complex with diorcinol that initiates conidiation. Due to genetic rearrangements of the clusters and the subsequent loss of some enzymes, the end products of the Emericella nidulans austinoid biosynthesis clusters are austinol and dehydroaustinol, even if additional enzymes, such as the O-acetyltransferase ausQ and the cytochrome P450 monooxygenase ausR are still functional. The polypeptide is Multifunctional dioxygenase ausE (Emericella nidulans (strain FGSC A4 / ATCC 38163 / CBS 112.46 / NRRL 194 / M139) (Aspergillus nidulans)).